The sequence spans 153 residues: Movement protein (153 aa).

2 disordered regions span residues 1–24 and 107–153; these read MAQE…EQDP and ALSL…RNQR. Composition is skewed to polar residues over residues 109-122 and 140-153; these read SLLS…NQPW and GQRQ…RNQR.

It belongs to the luteoviruses movement protein family.

It localises to the host nucleus envelope. Its function is as follows. Transports viral genome to neighboring plant cells directly through plasmosdesmata, without any budding. The movement protein allows efficient cell to cell propagation, by bypassing the host cell wall barrier. Acts as a suppressor of RNA-mediated gene silencing, also known as post-transcriptional gene silencing (PTGS), a mechanism of plant viral defense that limits the accumulation of viral RNAs. This is Movement protein from Avena byzantina (Oat).